We begin with the raw amino-acid sequence, 294 residues long: Tryptophan 2,3-dioxygenase 1 (294 aa).

The disordered stretch occupies residues 1–20 (MSEPIQPTRPAASGCPMHGA). Substrate is bound by residues 63–67 (FIVQH), Y125, and R129. Heme is bound at residue H252. Substrate is bound at residue T266.

It belongs to the tryptophan 2,3-dioxygenase family. Homotetramer. Requires heme as cofactor.

The catalysed reaction is L-tryptophan + O2 = N-formyl-L-kynurenine. It functions in the pathway amino-acid degradation; L-tryptophan degradation via kynurenine pathway; L-kynurenine from L-tryptophan: step 1/2. Functionally, heme-dependent dioxygenase that catalyzes the oxidative cleavage of the L-tryptophan (L-Trp) pyrrole ring and converts L-tryptophan to N-formyl-L-kynurenine. Catalyzes the oxidative cleavage of the indole moiety. The protein is Tryptophan 2,3-dioxygenase 1 of Ralstonia nicotianae (strain ATCC BAA-1114 / GMI1000) (Ralstonia solanacearum).